A 719-amino-acid chain; its full sequence is Polyribonucleotide nucleotidyltransferase (719 aa).

2 residues coordinate Mg(2+): D507 and D513. Residues 573–633 (PKLELFSVDP…EQIKAAKDYI (61 aa)) form the KH domain. One can recognise an S1 motif domain in the interval 658-719 (GQEFQGIVKK…NGKISVDLCE (62 aa)).

It belongs to the polyribonucleotide nucleotidyltransferase family. Requires Mg(2+) as cofactor.

It localises to the cytoplasm. The enzyme catalyses RNA(n+1) + phosphate = RNA(n) + a ribonucleoside 5'-diphosphate. Involved in mRNA degradation. Catalyzes the phosphorolysis of single-stranded polyribonucleotides processively in the 3'- to 5'-direction. This chain is Polyribonucleotide nucleotidyltransferase, found in Campylobacter jejuni (strain RM1221).